A 732-amino-acid polypeptide reads, in one-letter code: X-ray repair cross-complementing protein 5 (732 aa).

Positions 9–231 constitute a VWFA domain; the sequence is AVVLCMDVGF…DEIYSFSESL (223 aa). Residues 138 to 165 form a leucine-zipper region; sequence LSSRFSKSQLDIIIHSLKKCDISLQFFL. The residue at position 144 (lysine 144) is an N6-acetyllysine. Residue lysine 195 forms a Glycyl lysine isopeptide (Lys-Gly) (interchain with G-Cter in SUMO2) linkage. Residues 253-452 form the Ku domain; sequence IGSNLSIRIA…KYAPTEAQLN (200 aa). A phosphoserine mark is found at serine 255 and serine 258. Position 265 is an N6-acetyllysine (lysine 265). Serine 318 bears the Phosphoserine mark. Lysine 332 is modified (N6-acetyllysine). Residues lysine 532 and lysine 534 each participate in a glycyl lysine isopeptide (Lys-Gly) (interchain with G-Cter in SUMO2) cross-link. Position 535 is a phosphothreonine (threonine 535). Glycyl lysine isopeptide (Lys-Gly) (interchain with G-Cter in SUMO2) cross-links involve residues lysine 566 and lysine 568. Serine 577, serine 579, and serine 580 each carry phosphoserine; by PRKDC. Lysine 660 and lysine 665 each carry N6-acetyllysine. Residues lysine 669 and lysine 688 each participate in a glycyl lysine isopeptide (Lys-Gly) (interchain with G-Cter in SUMO2) cross-link. Threonine 715 carries the phosphothreonine; by PRKDC modification. Positions 720 to 728 match the EEXXXDL motif motif; it reads EEGGDVDDL.

This sequence belongs to the ku80 family. Heterodimer composed of XRCC5/Ku80 and XRCC6/Ku70; heterodimerization stabilizes XRCC5 protein. Component of the core long-range non-homologous end joining (NHEJ) complex (also named DNA-PK complex) composed of PRKDC, LIG4, XRCC4, XRCC6/Ku70, XRCC5/Ku86 and NHEJ1/XLF. Additional component of the NHEJ complex includes PAXX. Following autophosphorylation, PRKDC dissociates from DNA, leading to formation of the short-range NHEJ complex, composed of LIG4, XRCC4, XRCC6/Ku70, XRCC5/Ku86 and NHEJ1/XLF. The XRCC5-XRCC6 dimer also associates with NAA15, and this complex displays DNA binding activity towards the osteocalcin FGF response element (OCFRE). In addition, XRCC5 binds to the osteoblast-specific transcription factors MSX2 and RUNX2. Interacts with ELF3. Interacts with APLF (via KBM motif). The XRCC5/XRCC6 dimer associates in a DNA-dependent manner with APEX1. Identified in a complex with DEAF1 and XRCC6. Interacts with NR4A3; the DNA-dependent protein kinase complex DNA-PK phosphorylates and activates NR4A3 and prevents NR4A3 ubiquitinylation and degradation. Interacts with RNF138. Interacts with CYREN isoform 1 (CYREN-1) and isoform 4 (CYREN-2) (via KBM motif). Interacts with WRN (via KBM motif). Interacts (via N-terminus) with HSF1 (via N-terminus); this interaction is direct and prevents XRCC5/XRCC6 heterodimeric binding and non-homologous end joining (NHEJ) repair activities induced by ionizing radiation (IR). Interacts with DHX9; this interaction occurs in a RNA-dependent manner. Part of the HDP-RNP complex composed of at least HEXIM1, PRKDC, XRCC5, XRCC6, paraspeckle proteins (SFPQ, NONO, PSPC1, RBM14, and MATR3) and NEAT1 RNA. Interacts with ERCC6. The XRCC5-XRCC6 dimer associates with ALKBH2. Interacts with TPRN; TPRN interacts with a number of DNA damage response proteins, is recruited to sites of DNA damage and may play a role in DNA damage repair. Interacts with ERCC6L2. In terms of assembly, (Microbial infection) Interacts with human T-cell leukemia virus 1/HTLV-1 protein HBZ. Post-translationally, ADP-ribosylated by PARP3. In terms of processing, phosphorylated on serine residues. Phosphorylation by PRKDC may enhance helicase activity. Sumoylated. Post-translationally, ubiquitinated by RNF8 via 'Lys-48'-linked ubiquitination following DNA damage, leading to its degradation and removal from DNA damage sites. Ubiquitinated by RNF138, leading to remove the Ku complex from DNA breaks.

It localises to the nucleus. Its subcellular location is the nucleolus. It is found in the chromosome. In terms of biological role, single-stranded DNA-dependent ATP-dependent helicase that plays a key role in DNA non-homologous end joining (NHEJ) by recruiting DNA-PK to DNA. Required for double-strand break repair and V(D)J recombination. Also has a role in chromosome translocation. The DNA helicase II complex binds preferentially to fork-like ends of double-stranded DNA in a cell cycle-dependent manner. It works in the 3'-5' direction. During NHEJ, the XRCC5-XRRC6 dimer performs the recognition step: it recognizes and binds to the broken ends of the DNA and protects them from further resection. Binding to DNA may be mediated by XRCC6. The XRCC5-XRRC6 dimer acts as a regulatory subunit of the DNA-dependent protein kinase complex DNA-PK by increasing the affinity of the catalytic subunit PRKDC to DNA by 100-fold. The XRCC5-XRRC6 dimer is probably involved in stabilizing broken DNA ends and bringing them together. The assembly of the DNA-PK complex to DNA ends is required for the NHEJ ligation step. The XRCC5-XRRC6 dimer probably also acts as a 5'-deoxyribose-5-phosphate lyase (5'-dRP lyase), by catalyzing the beta-elimination of the 5' deoxyribose-5-phosphate at an abasic site near double-strand breaks. XRCC5 probably acts as the catalytic subunit of 5'-dRP activity, and allows to 'clean' the termini of abasic sites, a class of nucleotide damage commonly associated with strand breaks, before such broken ends can be joined. The XRCC5-XRRC6 dimer together with APEX1 acts as a negative regulator of transcription. In association with NAA15, the XRCC5-XRRC6 dimer binds to the osteocalcin promoter and activates osteocalcin expression. As part of the DNA-PK complex, involved in the early steps of ribosome assembly by promoting the processing of precursor rRNA into mature 18S rRNA in the small-subunit processome. Binding to U3 small nucleolar RNA, recruits PRKDC and XRCC5/Ku86 to the small-subunit processome. Plays a role in the regulation of DNA virus-mediated innate immune response by assembling into the HDP-RNP complex, a complex that serves as a platform for IRF3 phosphorylation and subsequent innate immune response activation through the cGAS-STING pathway. The sequence is that of X-ray repair cross-complementing protein 5 (XRCC5) from Homo sapiens (Human).